The primary structure comprises 937 residues: Protein translocase subunit SecA (937 aa).

ATP is bound by residues Q87, 105 to 109 (GEGKT), and D494. A disordered region spans residues 881–937 (RGLNYIGPDEGGRASVHSDAEEYGGGTPAAAGTRRERREAARAEGKGKRGPKSRRKH). Basic and acidic residues-rich tracts occupy residues 890 to 900 (EGGRASVHSDA) and 913 to 927 (TRRERREAARAEGKG). Residues 928-937 (KRGPKSRRKH) are compositionally biased toward basic residues.

It belongs to the SecA family. Monomer and homodimer. Part of the essential Sec protein translocation apparatus which comprises SecA, SecYEG and auxiliary proteins SecDF. Other proteins may also be involved.

The protein resides in the cell membrane. It is found in the cytoplasm. It catalyses the reaction ATP + H2O + cellular proteinSide 1 = ADP + phosphate + cellular proteinSide 2.. In terms of biological role, part of the Sec protein translocase complex. Interacts with the SecYEG preprotein conducting channel. Has a central role in coupling the hydrolysis of ATP to the transfer of proteins into and across the cell membrane, serving as an ATP-driven molecular motor driving the stepwise translocation of polypeptide chains across the membrane. The chain is Protein translocase subunit SecA from Nocardia farcinica (strain IFM 10152).